A 69-amino-acid chain; its full sequence is Putative membrane protein insertion efficiency factor (69 aa).

It belongs to the UPF0161 family.

The protein localises to the cell membrane. In terms of biological role, could be involved in insertion of integral membrane proteins into the membrane. In Desulfitobacterium hafniense (strain Y51), this protein is Putative membrane protein insertion efficiency factor.